The following is a 186-amino-acid chain: UPF0301 protein CGSHiEE_01530 (186 aa).

This sequence belongs to the UPF0301 (AlgH) family.

In Haemophilus influenzae (strain PittEE), this protein is UPF0301 protein CGSHiEE_01530.